Reading from the N-terminus, the 160-residue chain is Ribosomal RNA large subunit methyltransferase H (160 aa).

Residues Leu76 and Gly108 each contribute to the S-adenosyl-L-methionine site.

It belongs to the RNA methyltransferase RlmH family. Homodimer.

Its subcellular location is the cytoplasm. It catalyses the reaction pseudouridine(1915) in 23S rRNA + S-adenosyl-L-methionine = N(3)-methylpseudouridine(1915) in 23S rRNA + S-adenosyl-L-homocysteine + H(+). In terms of biological role, specifically methylates the pseudouridine at position 1915 (m3Psi1915) in 23S rRNA. This chain is Ribosomal RNA large subunit methyltransferase H, found in Rhodopseudomonas palustris (strain BisB5).